A 323-amino-acid polypeptide reads, in one-letter code: NADH-ubiquinone oxidoreductase chain 1 (323 aa).

A run of 8 helical transmembrane segments spans residues 8 to 28, 74 to 94, 105 to 125, 150 to 170, 176 to 196, 227 to 247, 258 to 278, and 298 to 318; these read LLNP…LTLI, LLFI…WLPL, LGML…LGSG, SLGL…LTTF, TIWL…STLA, LFFL…TILF, ELTS…FLWV, and FLPI…FTGS.

It belongs to the complex I subunit 1 family.

Its subcellular location is the mitochondrion inner membrane. It carries out the reaction a ubiquinone + NADH + 5 H(+)(in) = a ubiquinol + NAD(+) + 4 H(+)(out). Its function is as follows. Core subunit of the mitochondrial membrane respiratory chain NADH dehydrogenase (Complex I) that is believed to belong to the minimal assembly required for catalysis. Complex I functions in the transfer of electrons from NADH to the respiratory chain. The immediate electron acceptor for the enzyme is believed to be ubiquinone. This chain is NADH-ubiquinone oxidoreductase chain 1 (MT-ND1), found in Latimeria chalumnae (Coelacanth).